Reading from the N-terminus, the 665-residue chain is Transketolase (665 aa).

H26 is a substrate binding site. Residues H66 and 114-116 (GPL) contribute to the thiamine diphosphate site. Mg(2+) is bound at residue D155. G156 and N185 together coordinate thiamine diphosphate. Mg(2+) contacts are provided by N185 and I187. H261, R358, and S385 together coordinate substrate. A thiamine diphosphate-binding site is contributed by H261. E411 (proton donor) is an active-site residue. F437 serves as a coordination point for thiamine diphosphate. Residues H461, D469, and R520 each contribute to the substrate site.

Belongs to the transketolase family. Homodimer. Mg(2+) serves as cofactor. Requires Ca(2+) as cofactor. Mn(2+) is required as a cofactor. The cofactor is Co(2+). It depends on thiamine diphosphate as a cofactor.

The catalysed reaction is D-sedoheptulose 7-phosphate + D-glyceraldehyde 3-phosphate = aldehydo-D-ribose 5-phosphate + D-xylulose 5-phosphate. Catalyzes the transfer of a two-carbon ketol group from a ketose donor to an aldose acceptor, via a covalent intermediate with the cofactor thiamine pyrophosphate. The protein is Transketolase (tkt) of Buchnera aphidicola subsp. Schizaphis graminum (strain Sg).